Reading from the N-terminus, the 308-residue chain is MKHYEVEIRDAKTREKLCFLDKVEPQATISEIKTLFTKTHPQWYPARQSLRLDPKGKSLKDEDVLQKLPVGTTATLYFRDLGAQISWVTVFLTEYAGPLFIYLLFYFRVPFIYGRKYDFTSSRHTVVHLACMCHSFHYIKRLLETLFVHRFSHGTMPLRNIFKNCTYYWGFAAWMAYYINHPLYTPPTYGVQQVKLALAVFVICQLGNFSIHMALRDLRPAGSKTRKIPYPTKNPFTWLFLLVSCPNYTYEVGSWIGFAILTQCVPVALFSLVGFTQMTIWAKGKHRSYLKEFRDYPPLRMPIIPFLL.

At 1-86 (MKHYEVEIRD…YFRDLGAQIS (86 aa)) the chain is on the cytoplasmic side. K22 is subject to N6-acetyllysine. S58 bears the Phosphoserine mark. The residue at position 60 (K60) is an N6-acetyllysine. The chain crosses the membrane as a helical span at residues 87–106 (WVTVFLTEYAGPLFIYLLFY). The Lumenal segment spans residues 107–124 (FRVPFIYGRKYDFTSSRH). A helical transmembrane segment spans residues 125 to 147 (TVVHLACMCHSFHYIKRLLETLF). Residues 148–158 (VHRFSHGTMPL) lie on the Cytoplasmic side of the membrane. The chain crosses the membrane as a helical span at residues 159–180 (RNIFKNCTYYWGFAAWMAYYIN). Over 181 to 189 (HPLYTPPTY) the chain is Lumenal. The helical transmembrane segment at 190–216 (GVQQVKLALAVFVICQLGNFSIHMALR) threads the bilayer. Over 217 to 245 (DLRPAGSKTRKIPYPTKNPFTWLFLLVSC) the chain is Cytoplasmic. A helical membrane pass occupies residues 246–262 (PNYTYEVGSWIGFAILT). At 263–264 (QC) the chain is on the lumenal side. Residues 265–292 (VPVALFSLVGFTQMTIWAKGKHRSYLKE) traverse the membrane as a helical segment. Over 293–308 (FRDYPPLRMPIIPFLL) the chain is Cytoplasmic.

The protein belongs to the steroid 5-alpha reductase family. In terms of assembly, interacts with ELOVL1 and LASS2. Glycosylated.

The protein localises to the endoplasmic reticulum membrane. The enzyme catalyses a very-long-chain 2,3-saturated fatty acyl-CoA + NADP(+) = a very-long-chain (2E)-enoyl-CoA + NADPH + H(+). It carries out the reaction octadecanoyl-CoA + NADP(+) = (2E)-octadecenoyl-CoA + NADPH + H(+). It catalyses the reaction (2E,7Z,10Z,13Z,16Z)-docosapentaenoyl-CoA + NADPH + H(+) = (7Z,10Z,13Z,16Z)-docosatetraenoyl-CoA + NADP(+). The catalysed reaction is (2E,7Z,10Z,13Z,16Z,19Z)-docosahexaenoyl-CoA + NADPH + H(+) = (7Z,10Z,13Z,16Z,19Z)-docosapentaenoyl-CoA + NADP(+). The enzyme catalyses (2E,8Z,11Z,14Z)-eicosatetraenoyl-CoA + NADPH + H(+) = (8Z,11Z,14Z)-eicosatrienoyl-CoA + NADP(+). It carries out the reaction (2E)-hexadecenoyl-CoA + NADPH + H(+) = hexadecanoyl-CoA + NADP(+). The protein operates within lipid metabolism; fatty acid biosynthesis. Its pathway is lipid metabolism; sphingolipid metabolism. In terms of biological role, involved in both the production of very long-chain fatty acids for sphingolipid synthesis and the degradation of the sphingosine moiety in sphingolipids through the sphingosine 1-phosphate metabolic pathway. Catalyzes the last of the four reactions of the long-chain fatty acids elongation cycle. This endoplasmic reticulum-bound enzymatic process, allows the addition of 2 carbons to the chain of long- and very long-chain fatty acids/VLCFAs per cycle. This enzyme reduces the trans-2,3-enoyl-CoA fatty acid intermediate to an acyl-CoA that can be further elongated by entering a new cycle of elongation. Thereby, it participates in the production of VLCFAs of different chain lengths that are involved in multiple biological processes as precursors of membrane lipids and lipid mediators. Catalyzes the saturation step of the sphingosine 1-phosphate metabolic pathway, the conversion of trans-2-hexadecenoyl-CoA to palmitoyl-CoA. This chain is Very-long-chain enoyl-CoA reductase (Tecr), found in Mus musculus (Mouse).